The primary structure comprises 249 residues: 5'-nucleotidase SurE (249 aa).

The a divalent metal cation site is built by Asp8, Asp9, Ser39, and Asn91.

It belongs to the SurE nucleotidase family. A divalent metal cation is required as a cofactor.

It localises to the cytoplasm. The catalysed reaction is a ribonucleoside 5'-phosphate + H2O = a ribonucleoside + phosphate. Its function is as follows. Nucleotidase that shows phosphatase activity on nucleoside 5'-monophosphates. This is 5'-nucleotidase SurE from Pseudomonas aeruginosa (strain UCBPP-PA14).